The chain runs to 127 residues: Aspartate 1-decarboxylase (127 aa).

The active-site Schiff-base intermediate with substrate; via pyruvic acid is the S25. S25 carries the pyruvic acid (Ser) modification. Substrate is bound at residue T57. The Proton donor role is filled by Y58. 73-75 (GAA) lines the substrate pocket.

It belongs to the PanD family. In terms of assembly, heterooctamer of four alpha and four beta subunits. Requires pyruvate as cofactor. Post-translationally, is synthesized initially as an inactive proenzyme, which is activated by self-cleavage at a specific serine bond to produce a beta-subunit with a hydroxyl group at its C-terminus and an alpha-subunit with a pyruvoyl group at its N-terminus.

Its subcellular location is the cytoplasm. It carries out the reaction L-aspartate + H(+) = beta-alanine + CO2. It functions in the pathway cofactor biosynthesis; (R)-pantothenate biosynthesis; beta-alanine from L-aspartate: step 1/1. Functionally, catalyzes the pyruvoyl-dependent decarboxylation of aspartate to produce beta-alanine. The chain is Aspartate 1-decarboxylase from Exiguobacterium sibiricum (strain DSM 17290 / CCUG 55495 / CIP 109462 / JCM 13490 / 255-15).